Consider the following 41-residue polypeptide: Large ribosomal subunit protein bL32c (41 aa).

The protein belongs to the bacterial ribosomal protein bL32 family.

The protein resides in the plastid. The protein is Large ribosomal subunit protein bL32c (rpl32) of Helicosporidium sp. subsp. Simulium jonesii (Green alga).